Reading from the N-terminus, the 190-residue chain is Peptidyl-tRNA hydrolase (190 aa).

Residue Tyr-19 participates in tRNA binding. The Proton acceptor role is filled by His-24. TRNA is bound by residues Tyr-72, Asn-74, and Asn-121.

The protein belongs to the PTH family.

The protein resides in the mitochondrion. It carries out the reaction an N-acyl-L-alpha-aminoacyl-tRNA + H2O = an N-acyl-L-amino acid + a tRNA + H(+). In terms of biological role, peptidyl-tRNA hydrolase involved in the recycling of tRNA-Lys from diacetyl-lysyl-tRNA-Lys and is important for mitochondrial function. The sequence is that of Peptidyl-tRNA hydrolase (PTH1) from Saccharomyces cerevisiae (strain ATCC 204508 / S288c) (Baker's yeast).